A 400-amino-acid chain; its full sequence is Nicotinate phosphoribosyltransferase (400 aa).

His220 carries the post-translational modification Phosphohistidine; by autocatalysis.

This sequence belongs to the NAPRTase family. Transiently phosphorylated on a His residue during the reaction cycle. Phosphorylation strongly increases the affinity for substrates and increases the rate of nicotinate D-ribonucleotide production. Dephosphorylation regenerates the low-affinity form of the enzyme, leading to product release.

The enzyme catalyses nicotinate + 5-phospho-alpha-D-ribose 1-diphosphate + ATP + H2O = nicotinate beta-D-ribonucleotide + ADP + phosphate + diphosphate. The protein operates within cofactor biosynthesis; NAD(+) biosynthesis; nicotinate D-ribonucleotide from nicotinate: step 1/1. Functionally, catalyzes the synthesis of beta-nicotinate D-ribonucleotide from nicotinate and 5-phospho-D-ribose 1-phosphate at the expense of ATP. This Cronobacter sakazakii (strain ATCC BAA-894) (Enterobacter sakazakii) protein is Nicotinate phosphoribosyltransferase.